Reading from the N-terminus, the 208-residue chain is Small ribosomal subunit protein uS2 (208 aa).

A disordered region spans residues lysine 189–serine 208.

The protein belongs to the universal ribosomal protein uS2 family.

The protein is Small ribosomal subunit protein uS2 (rps2) of Pyrobaculum aerophilum (strain ATCC 51768 / DSM 7523 / JCM 9630 / CIP 104966 / NBRC 100827 / IM2).